The primary structure comprises 224 residues: MKSQTKSSKVNRAWLNDHVNDTYVKLAKLEGYRARAAYKLKEIDETLGLIKPGQLVVDLGSTPGAWSQYVRRKMSPKTATGGGAAVGALNGTIIALDILPMEPVEGVVFLQGDFRESDVLLQLEAEMKGRQADLVLSDMAPNLSGIDSADAARIENLVELALEFAQNHMKPEGALVAKVFHGASYDPLVKRFKETFLLVKRIKPKASRDKSSETFLVGLGLKPH.

5 residues coordinate S-adenosyl-L-methionine: Gly-64, Trp-66, Asp-97, Asp-113, and Asp-138. The active-site Proton acceptor is the Lys-178.

Belongs to the class I-like SAM-binding methyltransferase superfamily. RNA methyltransferase RlmE family.

The protein localises to the cytoplasm. It carries out the reaction uridine(2552) in 23S rRNA + S-adenosyl-L-methionine = 2'-O-methyluridine(2552) in 23S rRNA + S-adenosyl-L-homocysteine + H(+). In terms of biological role, specifically methylates the uridine in position 2552 of 23S rRNA at the 2'-O position of the ribose in the fully assembled 50S ribosomal subunit. In Albidiferax ferrireducens (strain ATCC BAA-621 / DSM 15236 / T118) (Rhodoferax ferrireducens), this protein is Ribosomal RNA large subunit methyltransferase E.